We begin with the raw amino-acid sequence, 200 residues long: Small ribosomal subunit protein uS4 (200 aa).

Residues 22-42 form a disordered region; that stretch reads TGKELEKRPYAPGPHGPNQRK. The 61-residue stretch at 92-152 folds into the S4 RNA-binding domain; sequence ARLDNLVYRM…EKSNNLVVVK (61 aa).

This sequence belongs to the universal ribosomal protein uS4 family. As to quaternary structure, part of the 30S ribosomal subunit. Contacts protein S5. The interaction surface between S4 and S5 is involved in control of translational fidelity.

Its function is as follows. One of the primary rRNA binding proteins, it binds directly to 16S rRNA where it nucleates assembly of the body of the 30S subunit. In terms of biological role, with S5 and S12 plays an important role in translational accuracy. The sequence is that of Small ribosomal subunit protein uS4 from Bacillus cereus (strain Q1).